Consider the following 250-residue polypeptide: DNA repair protein RecO (250 aa).

The protein belongs to the RecO family.

Functionally, involved in DNA repair and RecF pathway recombination. The protein is DNA repair protein RecO of Syntrophobacter fumaroxidans (strain DSM 10017 / MPOB).